We begin with the raw amino-acid sequence, 136 residues long: Large ribosomal subunit protein uL16 (136 aa).

The protein belongs to the universal ribosomal protein uL16 family. In terms of assembly, part of the 50S ribosomal subunit.

Functionally, binds 23S rRNA and is also seen to make contacts with the A and possibly P site tRNAs. In Alteromonas mediterranea (strain DSM 17117 / CIP 110805 / LMG 28347 / Deep ecotype), this protein is Large ribosomal subunit protein uL16.